The chain runs to 239 residues: Ubiquinone biosynthesis O-methyltransferase (239 aa).

S-adenosyl-L-methionine is bound by residues Arg45, Gly64, Asp85, and Met129.

This sequence belongs to the methyltransferase superfamily. UbiG/COQ3 family.

The catalysed reaction is a 3-demethylubiquinol + S-adenosyl-L-methionine = a ubiquinol + S-adenosyl-L-homocysteine + H(+). It carries out the reaction a 3-(all-trans-polyprenyl)benzene-1,2-diol + S-adenosyl-L-methionine = a 2-methoxy-6-(all-trans-polyprenyl)phenol + S-adenosyl-L-homocysteine + H(+). It participates in cofactor biosynthesis; ubiquinone biosynthesis. Its function is as follows. O-methyltransferase that catalyzes the 2 O-methylation steps in the ubiquinone biosynthetic pathway. In Nitrosospira multiformis (strain ATCC 25196 / NCIMB 11849 / C 71), this protein is Ubiquinone biosynthesis O-methyltransferase.